The chain runs to 89 residues: Small ribosomal subunit protein uS15 (89 aa).

A compositionally biased stretch (basic and acidic residues) spans 1 to 21; that stretch reads MSITTEEKARVMKEYGTKDGD. Residues 1-24 form a disordered region; sequence MSITTEEKARVMKEYGTKDGDTGS.

Belongs to the universal ribosomal protein uS15 family. As to quaternary structure, part of the 30S ribosomal subunit. Forms a bridge to the 50S subunit in the 70S ribosome, contacting the 23S rRNA.

In terms of biological role, one of the primary rRNA binding proteins, it binds directly to 16S rRNA where it helps nucleate assembly of the platform of the 30S subunit by binding and bridging several RNA helices of the 16S rRNA. Its function is as follows. Forms an intersubunit bridge (bridge B4) with the 23S rRNA of the 50S subunit in the ribosome. This Ruegeria pomeroyi (strain ATCC 700808 / DSM 15171 / DSS-3) (Silicibacter pomeroyi) protein is Small ribosomal subunit protein uS15.